Consider the following 192-residue polypeptide: Segregation and condensation protein B (192 aa).

The protein belongs to the ScpB family. In terms of assembly, homodimer. Homodimerization may be required to stabilize the binding of ScpA to the Smc head domains. Component of a cohesin-like complex composed of ScpA, ScpB and the Smc homodimer, in which ScpA and ScpB bind to the head domain of Smc. The presence of the three proteins is required for the association of the complex with DNA.

It localises to the cytoplasm. Its function is as follows. Participates in chromosomal partition during cell division. May act via the formation of a condensin-like complex containing Smc and ScpA that pull DNA away from mid-cell into both cell halves. The protein is Segregation and condensation protein B of Oceanobacillus iheyensis (strain DSM 14371 / CIP 107618 / JCM 11309 / KCTC 3954 / HTE831).